A 576-amino-acid polypeptide reads, in one-letter code: Arginine--tRNA ligase (576 aa).

A 'HIGH' region motif is present at residues 126 to 136 (ANPTGPMHIGH).

The protein belongs to the class-I aminoacyl-tRNA synthetase family. Monomer.

Its subcellular location is the cytoplasm. The enzyme catalyses tRNA(Arg) + L-arginine + ATP = L-arginyl-tRNA(Arg) + AMP + diphosphate. This Rickettsia africae (strain ESF-5) protein is Arginine--tRNA ligase.